Consider the following 107-residue polypeptide: Parvalbumin beta (107 aa).

S1 bears the N-acetylserine mark. 2 consecutive EF-hand domains span residues 37-72 and 76-107; these read KSLDDVKKAFYVIDQDKSGFIEEDELKLFLQNFSPS and LTDAETKAFLADGDKDGDGMIGVDEFAAMIKA. Ca(2+)-binding residues include D50, D52, S54, F56, E58, E61, D89, D91, D93, M95, and E100.

This sequence belongs to the parvalbumin family.

Functionally, in muscle, parvalbumin is thought to be involved in relaxation after contraction. It binds two calcium ions. This Esox lucius (Northern pike) protein is Parvalbumin beta.